The primary structure comprises 213 residues: Uridine kinase (213 aa).

14–21 (GASASGKS) is a binding site for ATP.

Belongs to the uridine kinase family.

It localises to the cytoplasm. The catalysed reaction is uridine + ATP = UMP + ADP + H(+). It catalyses the reaction cytidine + ATP = CMP + ADP + H(+). Its pathway is pyrimidine metabolism; CTP biosynthesis via salvage pathway; CTP from cytidine: step 1/3. It participates in pyrimidine metabolism; UMP biosynthesis via salvage pathway; UMP from uridine: step 1/1. The chain is Uridine kinase from Vibrio campbellii (strain ATCC BAA-1116).